The chain runs to 37 residues: Photosystem II reaction center protein M (37 aa).

A helical transmembrane segment spans residues 5-25; sequence ILAFIATALFILVPTAFLLII.

Belongs to the PsbM family. As to quaternary structure, PSII is composed of 1 copy each of membrane proteins PsbA, PsbB, PsbC, PsbD, PsbE, PsbF, PsbH, PsbI, PsbJ, PsbK, PsbL, PsbM, PsbT, PsbX, PsbY, PsbZ, Psb30/Ycf12, at least 3 peripheral proteins of the oxygen-evolving complex and a large number of cofactors. It forms dimeric complexes.

It localises to the plastid. The protein resides in the chloroplast thylakoid membrane. One of the components of the core complex of photosystem II (PSII). PSII is a light-driven water:plastoquinone oxidoreductase that uses light energy to abstract electrons from H(2)O, generating O(2) and a proton gradient subsequently used for ATP formation. It consists of a core antenna complex that captures photons, and an electron transfer chain that converts photonic excitation into a charge separation. This subunit is found at the monomer-monomer interface. This Pelargonium hortorum (Common geranium) protein is Photosystem II reaction center protein M.